The sequence spans 346 residues: N-acetyl-gamma-glutamyl-phosphate reductase (346 aa).

Cys149 is a catalytic residue.

It belongs to the NAGSA dehydrogenase family. Type 1 subfamily.

It localises to the cytoplasm. The enzyme catalyses N-acetyl-L-glutamate 5-semialdehyde + phosphate + NADP(+) = N-acetyl-L-glutamyl 5-phosphate + NADPH + H(+). It participates in amino-acid biosynthesis; L-arginine biosynthesis; N(2)-acetyl-L-ornithine from L-glutamate: step 3/4. Catalyzes the NADPH-dependent reduction of N-acetyl-5-glutamyl phosphate to yield N-acetyl-L-glutamate 5-semialdehyde. The protein is N-acetyl-gamma-glutamyl-phosphate reductase of Desulfotalea psychrophila (strain LSv54 / DSM 12343).